We begin with the raw amino-acid sequence, 196 residues long: Pyridoxal 5'-phosphate synthase subunit PdxT (196 aa).

L-glutamine is bound at residue 46-48 (GES). The Nucleophile role is filled by C78. L-glutamine is bound by residues R105 and 133–134 (IR). Residues H169 and E171 each act as charge relay system in the active site.

Belongs to the glutaminase PdxT/SNO family. In terms of assembly, in the presence of PdxS, forms a dodecamer of heterodimers. Only shows activity in the heterodimer.

It carries out the reaction aldehydo-D-ribose 5-phosphate + D-glyceraldehyde 3-phosphate + L-glutamine = pyridoxal 5'-phosphate + L-glutamate + phosphate + 3 H2O + H(+). It catalyses the reaction L-glutamine + H2O = L-glutamate + NH4(+). The protein operates within cofactor biosynthesis; pyridoxal 5'-phosphate biosynthesis. In terms of biological role, catalyzes the hydrolysis of glutamine to glutamate and ammonia as part of the biosynthesis of pyridoxal 5'-phosphate. The resulting ammonia molecule is channeled to the active site of PdxS. The sequence is that of Pyridoxal 5'-phosphate synthase subunit PdxT from Geobacillus stearothermophilus (Bacillus stearothermophilus).